A 523-amino-acid chain; its full sequence is Calcium-dependent protein kinase 34 (523 aa).

Positions 1–60 (MGNCCSHGRDSDDNKEEPRPENGGGGVGAAEASVRASKHPPASPPPATKQGPIGPVLGRP) are disordered. Residue G2 is the site of N-myristoyl glycine attachment. Residues 7 to 20 (HGRDSDDNKEEPRP) show a composition bias toward basic and acidic residues. Positions 68–326 (YTLGKELGRG…AAQVLNHPWI (259 aa)) constitute a Protein kinase domain. ATP contacts are provided by residues 74-82 (LGRGQFGVT) and K97. Catalysis depends on D192, which acts as the Proton acceptor. A Phosphoserine modification is found at S232. The tract at residues 332 to 362 (APDVPLDNAVMSRLKQFKAMNNFKKVALRVI) is autoinhibitory domain. EF-hand domains follow at residues 369-404 (EEIM…QGTR), 405-440 (LSEY…INRL), 441-476 (DREE…FGMN), and 480-511 (DIKE…GNPD). Ca(2+) is bound by residues D382, D384, S386, T388, E393, D418, D420, N422, T424, E429, D454, D456, S458, Y460, E465, D489, D491, D493, R495, and E500.

Belongs to the protein kinase superfamily. Ser/Thr protein kinase family. CDPK subfamily.

Its subcellular location is the membrane. It carries out the reaction L-seryl-[protein] + ATP = O-phospho-L-seryl-[protein] + ADP + H(+). It catalyses the reaction L-threonyl-[protein] + ATP = O-phospho-L-threonyl-[protein] + ADP + H(+). Activated by calcium. Autophosphorylation may play an important role in the regulation of the kinase activity. Its function is as follows. May play a role in signal transduction pathways that involve calcium as a second messenger. In Arabidopsis thaliana (Mouse-ear cress), this protein is Calcium-dependent protein kinase 34 (CPK34).